Consider the following 701-residue polypeptide: MNKYVLLGVTALIMAMVICVEANDGNSPSRKMEEVHRESKLMITKTTVSIICASTDYKQDCTTSLATVRSPDPRNLIRSAFDLAIISIRSGIDRGMIDLKSRADADMHTREALNTCRELMDDAIDDLRKTRDKFRGFLFTRLSDFVEDLCVWLSGSITYQQTCIDGFEGIDSEAAVMMERVMRKGQHLTSNGLAIAANLDKLLKAFRIPFPFLRSRRGRLGILGSGSSRDESVGSSQDSPPNEDSSDDSPSTVDSSENQPVDSSSENQSSDSSNNRPLDSSKNQQMESSEDTPKKSAFSGNQPLDDSSDKLPQKSTSSENQPLDSSENPPQKSTSSENRPLDPLRKLNPLNKLDSLKDRHLSEEGEFPPWVTPHSRRLLARRPRNNGIKANVVVAKDGSGKCKTIAQALAMVPMKNTKKFVIHIKEGVYKEKVEVTKKMLHVMFVGDGPTKTVITGDIAFLPDQVGTYRTASVAVNGDYFMAKDIGFENTAGAARHQAVALRVSADFAVFFNCHMNGYQDTLYVHTHRQFYRNCRVSGTIDFVFGDAKAVFQNCEFVIRRPMEHQQCIVTAQGRKDRRETTGIVIHNSRITGDASYLPVKAKNRAFLGRPWKEFSRTIIMNTEIDDVIDPEGWLKWNETFALNTLFYTEYRNRGRGSGQGRRVRWRGIKRISDRAAREFAPGNFLRGNTWIPQTRIPYNAN.

The signal sequence occupies residues 1–22; it reads MNKYVLLGVTALIMAMVICVEA. A pectinesterase inhibitor 43 region spans residues 42–195; it reads MITKTTVSII…QHLTSNGLAI (154 aa). Composition is skewed to low complexity over residues 221–256 and 263–275; these read GILG…VDSS and SSSE…SSNN. A disordered region spans residues 221–351; it reads GILGSGSSRD…DPLRKLNPLN (131 aa). N267 carries N-linked (GlcNAc...) asparagine glycosylation. 2 stretches are compositionally biased toward polar residues: residues 276–287 and 313–338; these read RPLDSSKNQQME and QKST…SSEN. The interval 391-688 is pectinesterase 43; that stretch reads NVVVAKDGSG…FAPGNFLRGN (298 aa). 2 residues coordinate substrate: T467 and Q497. The active-site Proton donor; for pectinesterase activity is the D520. C534 and C554 are joined by a disulfide. D541 (nucleophile; for pectinesterase activity) is an active-site residue. 2 residues coordinate substrate: R609 and W611. Residue N637 is glycosylated (N-linked (GlcNAc...) asparagine).

It in the N-terminal section; belongs to the PMEI family. The protein in the C-terminal section; belongs to the pectinesterase family. Expressed in flower buds.

Its subcellular location is the secreted. It localises to the cell wall. It carries out the reaction [(1-&gt;4)-alpha-D-galacturonosyl methyl ester](n) + n H2O = [(1-&gt;4)-alpha-D-galacturonosyl](n) + n methanol + n H(+). It participates in glycan metabolism; pectin degradation; 2-dehydro-3-deoxy-D-gluconate from pectin: step 1/5. Functionally, acts in the modification of cell walls via demethylesterification of cell wall pectin. This is Putative pectinesterase/pectinesterase inhibitor 43 (PME43) from Arabidopsis thaliana (Mouse-ear cress).